The following is a 379-amino-acid chain: Protein hairy (379 aa).

The interval 20–50 is disordered; sequence STQQQQQQQQHKEAPIKSDRRSNKPIMEKRR. Residues 29–47 show a composition bias toward basic and acidic residues; it reads QHKEAPIKSDRRSNKPIME. Residues 36–55 form an interaction with Topors region; it reads KSDRRSNKPIMEKRRRARIN. The bHLH domain occupies 38–95; sequence DRRSNKPIMEKRRRARINNCLNELKTLILDATKKDPARHSKLEKADILEKTVKHLQEL. The Orange domain occupies 114–143; it reads FKAGFADCANEVSRFPGLDSTQRRRLLQHL. Disordered regions lie at residues 167–208 and 298–345; these read QSLH…NTTA and QRTA…VKPS. Composition is skewed to low complexity over residues 182–207 and 301–328; these read PEQE…TNTT and ASTG…GSYA. A WRPW motif motif is present at residues 376–379; the sequence is WRPW.

Transcription repression requires formation of a complex with a corepressor protein (Groucho).

The protein localises to the nucleus. Pair-rule protein that regulates embryonic segmentation and adult bristle patterning. Transcriptional repressor of genes that require a bHLH protein for their transcription (e.g. ftz). The polypeptide is Protein hairy (Drosophila virilis (Fruit fly)).